Consider the following 757-residue polypeptide: Exo-alpha-(1-&gt;6)-L-arabinopyranosidase (757 aa).

Residue Asp232 is part of the active site.

It belongs to the glycosyl hydrolase 3 family. As to quaternary structure, homotetramer.

Its activity is regulated as follows. Completely inhibited by Cu(2+) and Fe(2+). In terms of biological role, catalyzes the hydrolysis of a non-reducing terminal alpha-L-arabinopyranosidic linkage in ginsenoside Rb2 (alpha-L-arabinopyranosyl-(1-&gt;6)-alpha-D-glucopyranosyl) to release alpha-D-glucopyranosyl (Rd). It is not able to hydrolyze alpha-L-arabinofuranosyl-(1-&gt;6)-alpha-D-glucopyranosyl (Rc). In Bifidobacterium breve (strain ACS-071-V-Sch8b), this protein is Exo-alpha-(1-&gt;6)-L-arabinopyranosidase.